The sequence spans 181 residues: Protein CENTRORADIALIS (181 aa).

The protein belongs to the phosphatidylethanolamine-binding protein family. In terms of assembly, may form homodimers in solution.

The protein resides in the cytoplasm. Functionally, expression of CEN leads to a morphological switch between shoot growth and the development of flower structures (inflorescence). May form complexes with phosphorylated ligands by interfering with kinases and their effectors. The polypeptide is Protein CENTRORADIALIS (CEN) (Antirrhinum majus (Garden snapdragon)).